A 250-amino-acid chain; its full sequence is Probable transcriptional regulatory protein DIP1378 (250 aa).

The interval 1–22 (MSGHSKWATTKHKKAANDAKRG) is disordered.

Belongs to the TACO1 family.

The protein localises to the cytoplasm. In Corynebacterium diphtheriae (strain ATCC 700971 / NCTC 13129 / Biotype gravis), this protein is Probable transcriptional regulatory protein DIP1378.